A 134-amino-acid polypeptide reads, in one-letter code: Cell division protein SepF (134 aa).

This sequence belongs to the SepF family. In terms of assembly, homodimer. Interacts with FtsZ.

It localises to the cytoplasm. In terms of biological role, cell division protein that is part of the divisome complex and is recruited early to the Z-ring. Probably stimulates Z-ring formation, perhaps through the cross-linking of FtsZ protofilaments. Its function overlaps with FtsA. The chain is Cell division protein SepF from Caldanaerobacter subterraneus subsp. tengcongensis (strain DSM 15242 / JCM 11007 / NBRC 100824 / MB4) (Thermoanaerobacter tengcongensis).